Reading from the N-terminus, the 219-residue chain is Ribose-5-phosphate isomerase A (219 aa).

Substrate is bound by residues 28 to 31 (TGST), 81 to 84 (DGAD), and 94 to 97 (KGGG). The active-site Proton acceptor is the E103. Substrate is bound at residue K121.

It belongs to the ribose 5-phosphate isomerase family. In terms of assembly, homodimer.

It carries out the reaction aldehydo-D-ribose 5-phosphate = D-ribulose 5-phosphate. It participates in carbohydrate degradation; pentose phosphate pathway; D-ribose 5-phosphate from D-ribulose 5-phosphate (non-oxidative stage): step 1/1. Catalyzes the reversible conversion of ribose-5-phosphate to ribulose 5-phosphate. This is Ribose-5-phosphate isomerase A from Escherichia fergusonii (strain ATCC 35469 / DSM 13698 / CCUG 18766 / IAM 14443 / JCM 21226 / LMG 7866 / NBRC 102419 / NCTC 12128 / CDC 0568-73).